We begin with the raw amino-acid sequence, 452 residues long: Zinc finger protein 277 (452 aa).

The C2H2-type 1 zinc finger occupies Leu200 to His224. The segment at Ala248–Asp271 is disordered. Positions Arg252–Arg261 are enriched in basic residues. The segment at Leu361–His385 adopts a C2H2-type 2 zinc-finger fold.

Belongs to the ZNF277 family. In terms of assembly, interacts with components of the origin recognition complex (ORC) complex, Orc2 and Orc3, components of the SAGA transcription coactivator-HAT complex, Gcn5 and e(y)2, components of the mRNP biogenesis THO complex, thoc5 and e(y)2, and a component of the TFIID complex, TBP. Also interacts with polybromo, a component of the chromatin remodeling SWI/SNF complex.

It localises to the nucleus. It is found in the cytoplasm. DNA binding protein which is involved in the positive regulation of both basal and inducible transcription. Mainly localizes to active promoter sites and interacts with components of various transcription and replication regulatory complexes, such as the ORC, SAGA, THO, TFIID and SWI/SNF complexes. It may therefore regulate transcription by promoting the association of these complexes to their binding sites. This is Zinc finger protein 277 from Drosophila melanogaster (Fruit fly).